Here is a 366-residue protein sequence, read N- to C-terminus: Capsular polysaccharide phosphotransferase LcbA (366 aa).

This sequence belongs to the stealth family.

In Neisseria meningitidis, this protein is Capsular polysaccharide phosphotransferase LcbA (lcbA).